The primary structure comprises 91 residues: Small ribosomal subunit protein uS17 (91 aa).

This sequence belongs to the universal ribosomal protein uS17 family. In terms of assembly, part of the 30S ribosomal subunit.

Functionally, one of the primary rRNA binding proteins, it binds specifically to the 5'-end of 16S ribosomal RNA. The chain is Small ribosomal subunit protein uS17 from Salinispora arenicola (strain CNS-205).